The following is a 336-amino-acid chain: UbiA prenyltransferase domain-containing protein 1 (336 aa).

The segment at methionine 1–serine 22 is disordered. Residues alanine 7–serine 22 are compositionally biased toward low complexity. The next 7 helical transmembrane spans lie at leucine 79–valine 99, valine 129–phenylalanine 149, leucine 158–leucine 178, tyrosine 180–alanine 200, histidine 201–leucine 221, leucine 254–alanine 274, and leucine 315–leucine 335.

It belongs to the UbiA prenyltransferase family.

It is found in the endoplasmic reticulum membrane. The protein resides in the golgi apparatus membrane. Its subcellular location is the mitochondrion membrane. The catalysed reaction is menadiol + (2E,6E,10E)-geranylgeranyl diphosphate = menaquinol-4 + diphosphate. It carries out the reaction all-trans-decaprenyl diphosphate + 4-hydroxybenzoate = 4-hydroxy-3-(all-trans-decaprenyl)benzoate + diphosphate. Its pathway is quinol/quinone metabolism; menaquinone biosynthesis. It participates in cofactor biosynthesis; ubiquinone biosynthesis. In terms of biological role, prenyltransferase that mediates the formation of menaquinone-4 (MK-4) and coenzyme Q10. MK-4 is a vitamin K2 isoform required for endothelial cell development. Mediates the conversion of phylloquinone (PK) into MK-4, probably by cleaving the side chain of phylloquinone (PK) to release 2-methyl-1,4-naphthoquinone (menadione; K3) and then prenylating it with geranylgeranyl pyrophosphate (GGPP) to form MK-4. Also plays a role in cardiovascular development independently of MK-4 biosynthesis, by acting as a coenzyme Q10 biosynthetic enzyme: coenzyme Q10, also named ubiquinone, plays an important antioxidant role in the cardiovascular system. Mediates biosynthesis of coenzyme Q10 in the Golgi membrane, leading to protect cardiovascular tissues from nos3/eNOS-dependent oxidative stress. In Danio rerio (Zebrafish), this protein is UbiA prenyltransferase domain-containing protein 1 (ubiad1).